The sequence spans 516 residues: Beta-glucosidase 1 (516 aa).

The first 21 residues, 1–21 (MGHRLVVVLLLALLVAGAARA), serve as a signal peptide directing secretion. A beta-D-glucoside is bound at residue Q68. N96 carries an N-linked (GlcNAc...) asparagine glycan. A beta-D-glucoside-binding positions include H169 and 214–215 (NE). E215 acts as the Proton donor in catalysis. C234 and C237 are disulfide-bonded. A glycan (N-linked (GlcNAc...) asparagine) is linked at N290. Y353 contacts a beta-D-glucoside. N364 carries N-linked (GlcNAc...) asparagine glycosylation. E424 provides a ligand contact to a beta-D-glucoside. E424 serves as the catalytic Nucleophile. N-linked (GlcNAc...) asparagine glycosylation is present at N432. A beta-D-glucoside is bound by residues W471, 478–479 (EW), and F487.

This sequence belongs to the glycosyl hydrolase 1 family.

It catalyses the reaction Hydrolysis of terminal, non-reducing beta-D-glucosyl residues with release of beta-D-glucose.. The polypeptide is Beta-glucosidase 1 (BGLU1) (Oryza sativa subsp. japonica (Rice)).